The primary structure comprises 810 residues: Phospholipase D alpha 1 (810 aa).

The C2 domain maps to 1–126; that stretch reads MAQHLLHGTL…INGEEVDQWV (126 aa). Position 187 (aspartate 187) interacts with Ca(2+). The 40-residue stretch at 327–366 folds into the PLD phosphodiesterase 1 domain; sequence TMFTHHQKIVVVDSEMPSRGGSEMRRIVSFVGGIDLCDGR. Active-site residues include histidine 332, lysine 334, and aspartate 339. Histidine 332 provides a ligand contact to a 1,2-diacyl-sn-glycero-3-phosphate. 2 residues coordinate Ca(2+): histidine 372 and histidine 406. Glutamine 522 and histidine 661 together coordinate a 1,2-diacyl-sn-glycero-3-phosphate. The 28-residue stretch at 656-683 folds into the PLD phosphodiesterase 2 domain; the sequence is FMIYVHTKMMIVDDEYIIIGSANINQRS. Active-site residues include histidine 661, lysine 663, and aspartate 668. Glutamate 722 provides a ligand contact to Ca(2+).

The protein belongs to the phospholipase D family. C2-PLD subfamily. Interacts with GPA1. This binding inhibits PLDALPHA1 activity and is relieved by GTP. Ca(2+) serves as cofactor. Highly expressed in roots, stems and flowers, moderately in leaves, seedlings and siliques. Not detected in seeds.

Its subcellular location is the cytoplasm. The protein localises to the cell membrane. It is found in the mitochondrion membrane. The protein resides in the microsome membrane. It localises to the vacuole. Its subcellular location is the cytoplasmic vesicle. The protein localises to the clathrin-coated vesicle. It carries out the reaction a 1,2-diacyl-sn-glycero-3-phosphocholine + H2O = a 1,2-diacyl-sn-glycero-3-phosphate + choline + H(+). Its activity is regulated as follows. Not inhibited by neomycin. In terms of biological role, hydrolyzes glycerol-phospholipids at the terminal phosphodiesteric bond to generate phosphatidic acids (PA). Plays an important role in various cellular processes, including phytohormone action and response to stress, characterized by acidification of the cell. Involved in wound induction of jasmonic acid. May be involved in membrane lipid remodeling. Probably involved in freezing tolerance by modulating the cold-responsive genes and accumulation of osmolytes. Can use phosphatidylcholine (PC), phosphatidylethanolamine (PE) and phosphatidylglycerol (PG) as substrates, both in presence or in absence of PIP2. Its main substrate is phosphatidylcholine. Stimulates the intrinsic GTPase activity of GPA1 upon binding. Mediates the abscisic acid effects on stomata through interaction with GPA1 and the production of phosphatidic acid that bind to ABI1. Involved in seed aging and deterioration. Involved in microtubule stabilization and salt tolerance. Involved in abscisic acid-induced stomatal closure. This chain is Phospholipase D alpha 1, found in Arabidopsis thaliana (Mouse-ear cress).